A 100-amino-acid chain; its full sequence is CCAAT/enhancer-binding protein homolog 2 (100 aa).

Disordered stretches follow at residues 1-60 (MSGN…ETLE) and 79-100 (AYAK…SSAV). The 64-residue stretch at 17 to 80 (EDDYSTKRKR…SFLKEMFMAY (64 aa)) folds into the bZIP domain. Positions 23–48 (KRKRNNEAVNRTRQKKRQEENDTAEK) are basic motif. Residues 24 to 83 (RKRNNEAVNRTRQKKRQEENDTAEKVDELKKENETLERKVEQLQKELSFLKEMFMAYAKN) are a coiled coil. Residues 39–60 (RQEENDTAEKVDELKKENETLE) are compositionally biased toward basic and acidic residues. Residues 52–73 (LKKENETLERKVEQLQKELSFL) form a leucine-zipper region. Positions 88–100 (GPPPPPPPSSSAV) are enriched in pro residues.

It belongs to the bZIP family. C/EBP subfamily. As to quaternary structure, interacts with transcription factor zip-11. Expressed broadly in somatic tissues including the intestine.

It localises to the nucleus. Its function is as follows. Transcription factor that binds to the promoter and the enhancer regions of target genes. Regulates expression of genes involved in fat metabolism, including ech-1.1 and fat-5. Has a protective role in response to infection by the Gram-negative bacterium P.aeruginosa. Required for the activation of infection response gene irg-1 following P.aeruginosa infection. Required to prevent P.aeruginosa ToxA-mediated lethality. May also function in concert with transcription factor zip-11 to mediate immune responses, independently of the pmk-1/p38 MAPK pathway. May act together with the bZIP transcription factor, zip-2. The chain is CCAAT/enhancer-binding protein homolog 2 from Caenorhabditis elegans.